Consider the following 727-residue polypeptide: LIM domain-binding protein 3 (727 aa).

The 84-residue stretch at 1 to 84 (MSYSVTLTGP…NLSLTLQKSK (84 aa)) folds into the PDZ domain. Residues Ser-44, Ser-121, and Ser-123 each carry the phosphoserine modification. The interval 86-197 (PIPISTTAPP…GSSQPRQYNN (112 aa)) is disordered. A compositionally biased stretch (low complexity) spans 140–156 (PTFSPAFSRPSAFSSLA). A compositionally biased stretch (polar residues) spans 188-197 (GSSQPRQYNN). Ser-217 is modified (phosphoserine). Omega-N-methylarginine is present on Arg-219. The residue at position 223 (Ser-223) is a Phosphoserine. Disordered stretches follow at residues 284–440 (TEFM…YTPS) and 472–529 (APSV…PQVP). Low complexity predominate over residues 312–385 (ATTPLLPASA…SAPATHTSYS (74 aa)). Over residues 428-440 (PYTPSPAPAYTPS) the composition is skewed to pro residues. A compositionally biased stretch (polar residues) spans 494–513 (DSFSQKFAPGKSTTSISKQT). Residues Arg-516 and Arg-533 each carry the omega-N-methylarginine modification. LIM zinc-binding domains follow at residues 549–607 (PLCG…QFFA), 608–667 (PLCA…LFST), and 668–727 (KCHG…TINL).

As to quaternary structure, interacts via its LIM domains with various PKC isoforms. Interacts via its PDZ domain with the ACTN2 C-terminal region. Interacts with MYOZ1, MYOZ2 and MYOZ3. In terms of tissue distribution, expressed primarily in skeletal muscle and to a lesser extent in heart. Also detected in brain and placenta.

It localises to the cytoplasm. The protein localises to the perinuclear region. Its subcellular location is the cell projection. The protein resides in the pseudopodium. It is found in the cytoskeleton. It localises to the myofibril. The protein localises to the sarcomere. Its subcellular location is the z line. In terms of biological role, may function as an adapter in striated muscle to couple protein kinase C-mediated signaling via its LIM domains to the cytoskeleton. The polypeptide is LIM domain-binding protein 3 (Homo sapiens (Human)).